The sequence spans 204 residues: MLHSLFRLTLLFYALFNALGSLPVFIALLKNFSFKKQQHIILRESIFALLLLLLFVTFGRGFFRLLGIILPAFQFTGSLLLGSIAIDMMKALPPQTETLERDKDEPIFFPLAFPVITGPAMITSTLGHMEEGIFPKKIVLGAIVLAWLFSLITLLLSSSINRLFGQMGLLALERLFGISLALMAGNLMLKALSTAFNIGYYVTP.

The next 6 membrane-spanning stretches (helical) occupy residues 9 to 29, 39 to 59, 66 to 86, 107 to 127, 138 to 158, and 176 to 196; these read TLLF…IALL, HIIL…VTFG, LGII…SIAI, IFFP…STLG, IVLG…LLSS, and FGIS…STAF.

The protein belongs to the UPF0056 (MarC) family.

Its subcellular location is the cell membrane. The chain is UPF0056 membrane protein CT_852 from Chlamydia trachomatis serovar D (strain ATCC VR-885 / DSM 19411 / UW-3/Cx).